The primary structure comprises 29 residues: U-homostoxin-Hdu1a (29 aa).

The O-linked (GlcNAc...) threonine glycan is linked to Thr1. Disulfide bonds link Cys7–Cys19 and Cys10–Cys25.

It belongs to the sea anemone BBH family.

The protein resides in the secreted. It is found in the nematocyst. The polypeptide is U-homostoxin-Hdu1a (Homostichanthus duerdeni (Sea anemone)).